We begin with the raw amino-acid sequence, 303 residues long: Major fimbrium anchoring subunit FimB (303 aa).

Residues 1–22 (MNDAKKYIVSVLILLVAGMFGG) form the signal peptide. Cysteine 23 carries N-palmitoyl cysteine lipidation. Cysteine 23 is lipidated: S-diacylglycerol cysteine.

This sequence belongs to the bacteroidetes fimbrillin superfamily. FimB/Mfa2 family. In terms of assembly, fimB is not part of the fimbrium itself, but anchors the fimbrium in the outer membrane. Linear, head-to-tail oligomerization of fimbrial subunits mediates assembly of the fimbrium stalk, while the minor components FimC, FimD and FimE probably form the fimbrium tip. The anchoring subunit FimB limits fimbrium length and is important for solid fimbrium attachment to the outer membrane. In its absence, the major fimbriae become very long and are easily detached from the membrane.

It is found in the cell outer membrane. Functionally, anchoring subunit of the major fimbriae. Regulates fimbrial length. These filamentous pili are attached to the cell surface; they mediate biofilm formation, adhesion onto host cells and onto other bacteria that are part of the oral microbiome. Fimbriae of P.gingivalis are major virulence factors. In Porphyromonas gingivalis (strain ATCC BAA-308 / W83), this protein is Major fimbrium anchoring subunit FimB.